A 367-amino-acid polypeptide reads, in one-letter code: tRNA-specific 2-thiouridylase MnmA (367 aa).

Residues 13–20 and Met39 each bind ATP; that span reads GLSGGVDS. Residues 99–101 form an interaction with target base in tRNA region; it reads NPD. The active-site Nucleophile is Cys104. Residues Cys104 and Cys200 are joined by a disulfide bond. Gly128 lines the ATP pocket. The tract at residues 150-152 is interaction with tRNA; sequence KDQ. Cys200 functions as the Cysteine persulfide intermediate in the catalytic mechanism. The interval 307–308 is interaction with tRNA; that stretch reads RY.

It belongs to the MnmA/TRMU family.

It is found in the cytoplasm. It catalyses the reaction S-sulfanyl-L-cysteinyl-[protein] + uridine(34) in tRNA + AH2 + ATP = 2-thiouridine(34) in tRNA + L-cysteinyl-[protein] + A + AMP + diphosphate + H(+). In terms of biological role, catalyzes the 2-thiolation of uridine at the wobble position (U34) of tRNA, leading to the formation of s(2)U34. In Neisseria meningitidis serogroup B (strain ATCC BAA-335 / MC58), this protein is tRNA-specific 2-thiouridylase MnmA.